The primary structure comprises 227 residues: 7-cyano-7-deazaguanine synthase (227 aa).

ATP is bound at residue 7–17 (LSGGLDSSTIL). Residues Cys191, Cys199, Cys202, and Cys205 each contribute to the Zn(2+) site.

Belongs to the QueC family. It depends on Zn(2+) as a cofactor.

It catalyses the reaction 7-carboxy-7-deazaguanine + NH4(+) + ATP = 7-cyano-7-deazaguanine + ADP + phosphate + H2O + H(+). It functions in the pathway purine metabolism; 7-cyano-7-deazaguanine biosynthesis. Functionally, catalyzes the ATP-dependent conversion of 7-carboxy-7-deazaguanine (CDG) to 7-cyano-7-deazaguanine (preQ(0)). This chain is 7-cyano-7-deazaguanine synthase, found in Trichormus variabilis (strain ATCC 29413 / PCC 7937) (Anabaena variabilis).